Consider the following 527-residue polypeptide: Bifunctional purine biosynthesis protein PurH (527 aa).

An MGS-like domain is found at 1–149 (MASDFLPVHR…KNFARVAVAT (149 aa)).

This sequence belongs to the PurH family.

The catalysed reaction is (6R)-10-formyltetrahydrofolate + 5-amino-1-(5-phospho-beta-D-ribosyl)imidazole-4-carboxamide = 5-formamido-1-(5-phospho-D-ribosyl)imidazole-4-carboxamide + (6S)-5,6,7,8-tetrahydrofolate. It catalyses the reaction IMP + H2O = 5-formamido-1-(5-phospho-D-ribosyl)imidazole-4-carboxamide. It functions in the pathway purine metabolism; IMP biosynthesis via de novo pathway; 5-formamido-1-(5-phospho-D-ribosyl)imidazole-4-carboxamide from 5-amino-1-(5-phospho-D-ribosyl)imidazole-4-carboxamide (10-formyl THF route): step 1/1. It participates in purine metabolism; IMP biosynthesis via de novo pathway; IMP from 5-formamido-1-(5-phospho-D-ribosyl)imidazole-4-carboxamide: step 1/1. The polypeptide is Bifunctional purine biosynthesis protein PurH (Xylella fastidiosa (strain 9a5c)).